The chain runs to 166 residues: Mitochondrial inner membrane protease subunit 1 (166 aa).

Active-site residues include Ser40 and Lys83.

Belongs to the peptidase S26 family. IMP1 subfamily. As to quaternary structure, heterodimer of 2 subunits, IMMPL1 and IMMPL2.

The protein resides in the mitochondrion inner membrane. Its function is as follows. Catalyzes the removal of transit peptides required for the targeting of proteins from the mitochondrial matrix, across the inner membrane, into the inter-membrane space. Known to process the nuclear encoded protein DIABLO. This is Mitochondrial inner membrane protease subunit 1 (Immp1l) from Mus musculus (Mouse).